The following is a 179-amino-acid chain: Small ribosomal subunit protein uS5c (179 aa).

The region spanning 26 to 89 (FVERLIKISR…TDGRKNLIDV (64 aa)) is the S5 DRBM domain.

This sequence belongs to the universal ribosomal protein uS5 family. In terms of assembly, part of the 30S ribosomal subunit. Contacts protein S4.

It is found in the plastid. The protein localises to the chloroplast. In terms of biological role, with S4 and S12 plays an important role in translational accuracy. This chain is Small ribosomal subunit protein uS5c (rps5), found in Thalassiosira pseudonana (Marine diatom).